The following is a 235-amino-acid chain: Orotidine 5'-phosphate decarboxylase (235 aa).

Residues aspartate 12, lysine 34, 61 to 70, threonine 116, arginine 177, glutamine 186, and arginine 207 contribute to the substrate site; that span reads DMKLLDIDNT. The active-site Proton donor is lysine 63.

The protein belongs to the OMP decarboxylase family. Type 1 subfamily. In terms of assembly, homodimer.

It catalyses the reaction orotidine 5'-phosphate + H(+) = UMP + CO2. It functions in the pathway pyrimidine metabolism; UMP biosynthesis via de novo pathway; UMP from orotate: step 2/2. Its function is as follows. Catalyzes the decarboxylation of orotidine 5'-monophosphate (OMP) to uridine 5'-monophosphate (UMP). This is Orotidine 5'-phosphate decarboxylase from Rhizobium leguminosarum bv. trifolii (strain WSM2304).